A 130-amino-acid polypeptide reads, in one-letter code: MAQVQYQGTGRRKNSVARVRLVPGTGKITMNGKPAEEYIPFANIREDMVQPFGVTETKGQYDVFVNVNGGGFSGQAGATRHGIARALLEVDPDFRGVLKSTGLLTRDARMKERKKPGLKKARKASQFSKR.

The interval 107 to 130 (DARMKERKKPGLKKARKASQFSKR) is disordered. Over residues 111–130 (KERKKPGLKKARKASQFSKR) the composition is skewed to basic residues.

It belongs to the universal ribosomal protein uS9 family.

In Ligilactobacillus salivarius (strain UCC118) (Lactobacillus salivarius), this protein is Small ribosomal subunit protein uS9.